The primary structure comprises 439 residues: Adenylosuccinate synthetase (439 aa).

Residues 25-31 (GDEGKGK), 53-55 (GHT), and Lys62 contribute to the GTP site. Asp26 acts as the Proton acceptor in catalysis. Residues Asp26 and Gly53 each coordinate Mg(2+). IMP-binding positions include 26-29 (DEGK) and 51-54 (NAGH). His54 acts as the Proton donor in catalysis. Residues Thr141, Arg155, Asn232, and Thr247 each coordinate IMP. Thr307 provides a ligand contact to GTP. Residue 307 to 313 (TTTNRPR) participates in substrate binding. Arg311 is a binding site for IMP. Residues Arg313, 339–341 (KLD), and 425–427 (GVG) each bind GTP.

Belongs to the adenylosuccinate synthetase family. As to quaternary structure, homodimer. It depends on Mg(2+) as a cofactor.

The protein localises to the cytoplasm. The enzyme catalyses IMP + L-aspartate + GTP = N(6)-(1,2-dicarboxyethyl)-AMP + GDP + phosphate + 2 H(+). It functions in the pathway purine metabolism; AMP biosynthesis via de novo pathway; AMP from IMP: step 1/2. In terms of biological role, plays an important role in the salvage pathway for purine nucleotide biosynthesis. Catalyzes the first commited step in the biosynthesis of AMP from IMP. This is Adenylosuccinate synthetase from Plasmodium chabaudi chabaudi.